We begin with the raw amino-acid sequence, 877 residues long: Protein SEY1 homolog (877 aa).

At 1 to 735 the chain is on the cytoplasmic side; it reads MVAFAGGART…LRSIEGEKQN (735 aa). The GB1/RHD3-type G domain occupies 49-307; that stretch reads GITYHVVGVL…VPLDGIPSYL (259 aa). A GTP-binding site is contributed by 59-66; sequence GGQSSGKS. Positions 388-410 form a coiled coil; that stretch reads RIDIVRKTEAELEEELLKVELKL. The helical transmembrane segment at 736 to 756 threads the bilayer; that stretch reads LPAWVLPVLLLLGWNEIWYVL. Over 757 to 759 the chain is Lumenal; sequence SSP. A helical membrane pass occupies residues 760 to 780; it reads VLLVVVVIIAAVFLRGFLLTQ. Over 781-877 the chain is Cytoplasmic; sequence WAIFEETGPT…KEEEVPTQKE (97 aa). The segment at 850 to 877 is disordered; it reads PTVLPPSTTSATLTRRLKKEEEVPTQKE. The span at 867–877 shows a compositional bias: basic and acidic residues; that stretch reads KKEEEVPTQKE.

Belongs to the TRAFAC class dynamin-like GTPase superfamily. GB1/RHD3 GTPase family. RHD3 subfamily.

It localises to the endoplasmic reticulum membrane. Functionally, probable GTP-binding protein that may be involved in cell development. This Trypanosoma cruzi (strain CL Brener) protein is Protein SEY1 homolog.